Here is a 400-residue protein sequence, read N- to C-terminus: Cytochrome P450 BJ-1 homolog (400 aa).

A heme-binding site is contributed by Cys-349.

It belongs to the cytochrome P450 family. The cofactor is heme.

In terms of biological role, cytochromes P450 are a group of heme-thiolate monooxygenases. They oxidize a variety of structurally unrelated compounds, including steroids, fatty acids, and xenobiotics. In Sinorhizobium fredii (strain NBRC 101917 / NGR234), this protein is Cytochrome P450 BJ-1 homolog (cyp112A2).